The chain runs to 424 residues: O-methyltransferase aunD (424 aa).

Asp275 provides a ligand contact to S-adenosyl-L-methionine. His326 acts as the Proton acceptor in catalysis.

It belongs to the class I-like SAM-binding methyltransferase superfamily. Cation-independent O-methyltransferase family.

Its pathway is secondary metabolite biosynthesis. Functionally, O-methyltransferase; part of the gene cluster that mediates the biosynthesis of aurasperone B, a dimeric gamma-naphthopyrone. The first step in the biosynthesis of aurasperone B is the production of gamma-naphthopyrone precursor YWA1 by the non-reducing polyketide synthase albA, via condensation of one acetyl-CoA starter unit with 6 malonyl-CoA units. YWA1 is then methylated by aunE at position C-6 to yield foncesin which is further methylated at position C-8 by aunD to produce fonsecin B. A key enzyme in the biosynthetic pathway is the cytochrome P450 monooxygenase aunB which catalyzes the oxidative dimerization of fonsecin B to aurasperone B. AunB also catalyzes the oxidative dimerization of rubrofusarin B into aurasperone A. The polypeptide is O-methyltransferase aunD (Aspergillus niger (strain ATCC MYA-4892 / CBS 513.88 / FGSC A1513)).